The primary structure comprises 306 residues: uncharacterized protein (306 aa).

It to L.delbrueckii similar ORF in glnA 5'region.

This is an uncharacterized protein from Lactobacillus delbrueckii subsp. bulgaricus.